We begin with the raw amino-acid sequence, 162 residues long: MKLIIAEKIKAVEQLTDKLNQAKTVIIFEYTGIPVSFFTELRSELRKSDCEMKIYTNNIMKRAAKATNYDGLISYFKGNKALVYSSTDLISPAKIIYEFSKKNSMIKIISGVIENKVASLDEINSLASLPSKEILLTMLVSGMMTPLMQLSACLCMLSKIKK.

Belongs to the universal ribosomal protein uL10 family. As to quaternary structure, part of the ribosomal stalk of the 50S ribosomal subunit. The N-terminus interacts with L11 and the large rRNA to form the base of the stalk. The C-terminus forms an elongated spine to which L12 dimers bind in a sequential fashion forming a multimeric L10(L12)X complex.

In terms of biological role, forms part of the ribosomal stalk, playing a central role in the interaction of the ribosome with GTP-bound translation factors. This chain is Large ribosomal subunit protein uL10, found in Phytoplasma mali (strain AT).